The sequence spans 108 residues: Insulin-like peptide 17 (108 aa).

The signal sequence occupies residues 1-19; the sequence is MFSTRGVLLLLSLMAAVAA.

It belongs to the insulin family. Expressed in head neurons and the uterus.

The protein resides in the secreted. Functionally, involved in the regulation of the larval diapause. This Caenorhabditis elegans protein is Insulin-like peptide 17.